A 560-amino-acid chain; its full sequence is MSQKLMFLFTLACLSSLPSPFISAQIPAIGNATSPSNICRFAPDPSYCRSVLPNQPGDIYSYGRLSLRRSLSRARRFISMIDAELDRKGKVAAKSTVGALEDCKFLASLTMDYLLSSSQTADSTKTLSLSRAEDVHTFLSAAITNEQTCLEGLKSTASENGLSGDLFNDTKLYGVSLALFSKGWVPRRQRSRPIWQPQARFKKFFGFRNGKLPLKMTERARAVYNTVTRRKLLQSDADAVQVSDIVTVIQNGTGNFTTINAAIAAAPNKTDGSNGYFLIYVTAGLYEEYVEVPKNKRYVMMIGDGINQTVITGNRSVVDGWTTFNSATFILSGPNFIGVNITIRNTAGPTKGQAVALRSGGDLSVFYSCSFEAYQDTLYTHSLRQFYRECDVYGTVDFIFGNAAVVLQNCNLYPRQPRKGQSNEVTAQGRTDPNQNTGTAIHGCTIRPADDLATSNYTVKTYLGRPWKEYSRTVVMQTYIDGFLEPSGWNAWSGDFALSTLYYAEYNNTGPGSDTTNRVTWPGYHVINATDASNFTVTNFLVGEGWIGQTGVPFVGGLIA.

Positions 1-24 are cleaved as a signal peptide; sequence MSQKLMFLFTLACLSSLPSPFISA. Positions 25–179 are pectinesterase inhibitor 20; the sequence is QIPAIGNATS…TKLYGVSLAL (155 aa). N-linked (GlcNAc...) asparagine glycosylation is found at N31, N168, N251, N255, N268, N307, and N314. The pectinesterase 20 stretch occupies residues 246–544; the sequence is VTVIQNGTGN…FTVTNFLVGE (299 aa). Residue T323 coordinates substrate. An N-linked (GlcNAc...) asparagine glycan is attached at N340. Substrate is bound at residue Q353. D376 functions as the Proton donor; for pectinesterase activity in the catalytic mechanism. The cysteines at positions 390 and 410 are disulfide-linked. The active-site Nucleophile; for pectinesterase activity is D397. Residues 417–441 form a disordered region; the sequence is PRKGQSNEVTAQGRTDPNQNTGTAI. Over residues 419–439 the composition is skewed to polar residues; sequence KGQSNEVTAQGRTDPNQNTGT. N456 is a glycosylation site (N-linked (GlcNAc...) asparagine). R465 and W467 together coordinate substrate. 3 N-linked (GlcNAc...) asparagine glycosylation sites follow: N507, N528, and N534.

In the N-terminal section; belongs to the PMEI family. It in the C-terminal section; belongs to the pectinesterase family. As to expression, expressed in flower buds.

The protein localises to the secreted. Its subcellular location is the cell wall. It carries out the reaction [(1-&gt;4)-alpha-D-galacturonosyl methyl ester](n) + n H2O = [(1-&gt;4)-alpha-D-galacturonosyl](n) + n methanol + n H(+). It participates in glycan metabolism; pectin degradation; 2-dehydro-3-deoxy-D-gluconate from pectin: step 1/5. Its function is as follows. Acts in the modification of cell walls via demethylesterification of cell wall pectin. The sequence is that of Probable pectinesterase/pectinesterase inhibitor 20 (PME20) from Arabidopsis thaliana (Mouse-ear cress).